The following is a 66-amino-acid chain: Large ribosomal subunit protein uL29 (66 aa).

Belongs to the universal ribosomal protein uL29 family.

The polypeptide is Large ribosomal subunit protein uL29 (Borreliella burgdorferi (strain ZS7) (Borrelia burgdorferi)).